The following is a 272-amino-acid chain: Putative pyruvate, phosphate dikinase regulatory protein (272 aa).

154-161 (GVSRTSKS) serves as a coordination point for ADP.

This sequence belongs to the pyruvate, phosphate/water dikinase regulatory protein family. PDRP subfamily.

The enzyme catalyses N(tele)-phospho-L-histidyl/L-threonyl-[pyruvate, phosphate dikinase] + ADP = N(tele)-phospho-L-histidyl/O-phospho-L-threonyl-[pyruvate, phosphate dikinase] + AMP + H(+). The catalysed reaction is N(tele)-phospho-L-histidyl/O-phospho-L-threonyl-[pyruvate, phosphate dikinase] + phosphate + H(+) = N(tele)-phospho-L-histidyl/L-threonyl-[pyruvate, phosphate dikinase] + diphosphate. Bifunctional serine/threonine kinase and phosphorylase involved in the regulation of the pyruvate, phosphate dikinase (PPDK) by catalyzing its phosphorylation/dephosphorylation. In Wolbachia pipientis subsp. Culex pipiens (strain wPip), this protein is Putative pyruvate, phosphate dikinase regulatory protein.